The chain runs to 228 residues: AA9 family lytic polysaccharide monooxygenase A (228 aa).

2 residues coordinate Cu(2+): histidine 1 and histidine 86. Histidine 1 is subject to Methylhistidine. 2 disulfide bridges follow: cysteine 56/cysteine 178 and cysteine 97/cysteine 101. The N-linked (GlcNAc...) asparagine glycan is linked to asparagine 138. Residues histidine 164 and glutamine 173 each coordinate O2. Tyrosine 175 is a Cu(2+) binding site.

The protein belongs to the polysaccharide monooxygenase AA9 family. Requires Cu(2+) as cofactor. In terms of processing, the catalytically essential N-terminal histidine His-22 is post-translationally modified by methylation to prevent protonation of the histidine side chain, and protect the critical active site of the enzyme from oxidative damage.

It localises to the secreted. It carries out the reaction [(1-&gt;4)-beta-D-glucosyl]n+m + reduced acceptor + O2 = 4-dehydro-beta-D-glucosyl-[(1-&gt;4)-beta-D-glucosyl]n-1 + [(1-&gt;4)-beta-D-glucosyl]m + acceptor + H2O.. With respect to regulation, small amounts of H(2)O(2) boost LPMO activity, while higher amounts lead to inactivation of the enzyme. Its function is as follows. Lytic polysaccharide monooxygenase (LPMO) that depolymerizes crystalline and amorphous polysaccharides via the oxidation of scissile alpha- or beta-(1-4)-glycosidic bonds, yielding C1 and C4 oxidation product. Catalysis by LPMOs requires the reduction of the active-site copper from Cu(II) to Cu(I) by a reducing agent and H(2)O(2) or O(2) as a cosubstrate. Is able to cleave cellulose and xylan to produce C1- and C4-oxidized products. This is AA9 family lytic polysaccharide monooxygenase A from Thermoascus aurantiacus.